The chain runs to 468 residues: Phosphomethylpyrimidine synthase (468 aa).

Residues N82, M111, Y141, H177, 197–199 (SRG), 238–241 (DSLR), and E277 contribute to the substrate site. H281 serves as a coordination point for Zn(2+). Y304 provides a ligand contact to substrate. H345 contributes to the Zn(2+) binding site. Residues C425, C428, and C433 each coordinate [4Fe-4S] cluster.

This sequence belongs to the ThiC family. The cofactor is [4Fe-4S] cluster.

It catalyses the reaction 5-amino-1-(5-phospho-beta-D-ribosyl)imidazole + S-adenosyl-L-methionine = 4-amino-2-methyl-5-(phosphooxymethyl)pyrimidine + CO + 5'-deoxyadenosine + formate + L-methionine + 3 H(+). Its pathway is cofactor biosynthesis; thiamine diphosphate biosynthesis. Catalyzes the synthesis of the hydroxymethylpyrimidine phosphate (HMP-P) moiety of thiamine from aminoimidazole ribotide (AIR) in a radical S-adenosyl-L-methionine (SAM)-dependent reaction. The chain is Phosphomethylpyrimidine synthase from Prochlorococcus marinus (strain SARG / CCMP1375 / SS120).